Consider the following 28-residue polypeptide: Conotoxin Cl5.3 (28 aa).

Belongs to the conotoxin T superfamily. Post-translationally, contains 2 disulfide bonds that can be either 'C1-C3, C2-C4' or 'C1-C4, C2-C3', since these disulfide connectivities have been observed for conotoxins with cysteine framework V (for examples, see AC P0DQQ7 and AC P81755). As to expression, expressed by the venom duct.

The protein resides in the secreted. The protein is Conotoxin Cl5.3 of Californiconus californicus (California cone).